The sequence spans 179 residues: Isopentenyl-diphosphate Delta-isomerase (179 aa).

The Mn(2+) site is built by histidine 24 and histidine 30. Residues 28-160 (LLHRAFSIFI…PEKFTVWFLT (133 aa)) form the Nudix hydrolase domain. Cysteine 65 is an active-site residue. Residue histidine 67 participates in Mn(2+) binding. Glutamate 85 lines the Mg(2+) pocket. Residues glutamate 110 and glutamate 112 each coordinate Mn(2+). The active site involves glutamate 112.

The protein belongs to the IPP isomerase type 1 family. In terms of assembly, homodimer. Mg(2+) is required as a cofactor. Mn(2+) serves as cofactor.

Its subcellular location is the cytoplasm. It catalyses the reaction isopentenyl diphosphate = dimethylallyl diphosphate. Its pathway is isoprenoid biosynthesis; dimethylallyl diphosphate biosynthesis; dimethylallyl diphosphate from isopentenyl diphosphate: step 1/1. Catalyzes the 1,3-allylic rearrangement of the homoallylic substrate isopentenyl (IPP) to its highly electrophilic allylic isomer, dimethylallyl diphosphate (DMAPP). This Serratia proteamaculans (strain 568) protein is Isopentenyl-diphosphate Delta-isomerase.